We begin with the raw amino-acid sequence, 56 residues long: Ovomucoid (56 aa).

The Kazal-like domain occupies V6–C56. 3 cysteine pairs are disulfide-bonded: C8-C38, C16-C35, and C24-C56. N45 carries an N-linked (GlcNAc...) asparagine glycan.

The protein resides in the secreted. The polypeptide is Ovomucoid (Pavo cristatus (Indian peafowl)).